The primary structure comprises 214 residues: A-type ATP synthase subunit D (214 aa).

The protein belongs to the V-ATPase D subunit family. In terms of assembly, has multiple subunits with at least A(3), B(3), C, D, E, F, H, I and proteolipid K(x).

Its subcellular location is the cell membrane. Its function is as follows. Component of the A-type ATP synthase that produces ATP from ADP in the presence of a proton gradient across the membrane. This Thermococcus gammatolerans (strain DSM 15229 / JCM 11827 / EJ3) protein is A-type ATP synthase subunit D.